Reading from the N-terminus, the 268-residue chain is Putative hydro-lyase PSPTO_5379 (268 aa).

The protein belongs to the D-glutamate cyclase family.

The chain is Putative hydro-lyase PSPTO_5379 from Pseudomonas syringae pv. tomato (strain ATCC BAA-871 / DC3000).